Reading from the N-terminus, the 594-residue chain is Metastasis-associated protein MTA3 (594 aa).

The BAH domain maps to 1–147 (MAANMYRVGD…PSLKTLLADK (147 aa)). The ELM2 domain maps to 148 to 259 (GEIRVGPRYQ…SAISVLVPLG (112 aa)). The 53-residue stretch at 266-318 (DEMEEWSASEASLFEEALEKYGKDFNDIRQDFLPWKSLTSIIEYYYMWKTTDR) folds into the SANT domain. The GATA-type; atypical zinc-finger motif lies at 379–406 (CESCYATQSHQWYSWGPPNMQCRLCAIC). Residues Ser428 and Ser430 each carry the phosphoserine modification. At Thr455 the chain carries Phosphothreonine. The residue at position 519 (Ser519) is a Phosphoserine.

This sequence belongs to the metastasis-associated protein family. In terms of assembly, component of the nucleosome remodeling and deacetylase (NuRD) repressor complex, composed of core proteins MTA1, MTA2, MTA3, RBBP4, RBBP7, HDAC1, HDAC2, MBD2, MBD3, and peripherally associated proteins CDK2AP1, CDK2AP2, GATAD2A, GATAD2B, CHD3, CHD4 and CHD5. The exact stoichiometry of the NuRD complex is unknown, and some subunits such as MBD2 and MBD3, GATAD2A and GATAD2B, and CHD3, CHD4 and CHD5 define mutually exclusive NuRD complexes. Interacts with BCL6. Interacts with NACC2. Interacts with PWWP2B. As to expression, expressed in germinal centers of lymphoid tissues. No expression in nonepithelial cells.

It is found in the nucleus. The protein resides in the cytoplasm. In terms of biological role, acts as a component of the histone deacetylase NuRD complex which participates in the remodeling of chromatin. Plays a role in maintenance of the normal epithelial architecture through the repression of SNAI1 transcription in a histone deacetylase-dependent manner, and thus the regulation of E-cadherin levels. Contributes to transcriptional repression by BCL6. The protein is Metastasis-associated protein MTA3 (MTA3) of Homo sapiens (Human).